A 345-amino-acid polypeptide reads, in one-letter code: Ferrochelatase (345 aa).

Fe cation is bound by residues His199 and Glu302.

This sequence belongs to the ferrochelatase family.

The protein localises to the cytoplasm. The catalysed reaction is heme b + 2 H(+) = protoporphyrin IX + Fe(2+). It participates in porphyrin-containing compound metabolism; protoheme biosynthesis; protoheme from protoporphyrin-IX: step 1/1. Functionally, catalyzes the ferrous insertion into protoporphyrin IX. The chain is Ferrochelatase from Porphyromonas gingivalis (strain ATCC 33277 / DSM 20709 / CIP 103683 / JCM 12257 / NCTC 11834 / 2561).